A 235-amino-acid polypeptide reads, in one-letter code: Peroxisomal membrane protein 11C (235 aa).

The Cytoplasmic segment spans residues 1–91 (MSTLETTRAE…LPLVLLGKSK (91 aa)). Residues 92–108 (NALLSTFLFLDQIVWLG) form a helical membrane-spanning segment. Residues 109 to 206 (RTGIYKDKER…LLQLAPKKVT (98 aa)) lie on the Lumenal side of the membrane. A helical transmembrane segment spans residues 207–226 (PRVTGAFGFASSLISCYQLL). Topologically, residues 227 to 235 (PSHPKSKMV) are cytoplasmic.

Belongs to the peroxin-11 family. Homooligomer. Interacts with ARC5 and FIS1B on peroxisomes. In terms of tissue distribution, expressed in roots and developing siliques.

The protein localises to the peroxisome membrane. In terms of biological role, involved in peroxisomal proliferation. Promotes peroxisomal duplication, aggregation or elongation without fission. This chain is Peroxisomal membrane protein 11C (PEX11C), found in Arabidopsis thaliana (Mouse-ear cress).